A 649-amino-acid polypeptide reads, in one-letter code: Protein arginine N-methyltransferase 5 (649 aa).

Residues 10-300 form a TIM barrel region; sequence KSESRYCGVE…SPYLDYIAYI (291 aa). The SAM-dependent MTase PRMT-type domain occupies 321-627; it reads LQSPLQPLMD…CGATKVWYEW (307 aa). Tyr-337 contacts S-adenosyl-L-methionine. Residue Phe-340 coordinates a protein. Residues 346–347, Glu-405, and 433–434 each bind S-adenosyl-L-methionine; these read KY and DM. Positions 449 and 458 each coordinate a protein. Active-site proton donor/acceptor residues include Glu-449 and Glu-458. The interval 479–649 is beta barrel; sequence PSSYTSFIEP…SNGRSYWVGL (171 aa). The interval 491–507 is dimerization; that stretch reads ASKLHNDIKAHKDIAHF.

The protein belongs to the class I-like SAM-binding methyltransferase superfamily. Protein arginine N-methyltransferase family.

The protein localises to the cytoplasm. It catalyses the reaction L-arginyl-[protein] + 2 S-adenosyl-L-methionine = N(omega),N(omega)'-dimethyl-L-arginyl-[protein] + 2 S-adenosyl-L-homocysteine + 2 H(+). Methylates arginine residues in proteins such as histone H4. This chain is Protein arginine N-methyltransferase 5 (PRMT5), found in Oryza sativa subsp. japonica (Rice).